The following is a 314-amino-acid chain: Homeobox protein DBX1-A (314 aa).

The homeobox DNA-binding region spans 175 to 234; sequence GMLRRAVFSDVQRKALEKMFQKQKYISKPDRKKLAAKLGLKDSQVKIWFQNRRMKWRNSK. Disordered regions lie at residues 234-279 and 292-314; these read KERE…CAPS and STDS…ITVS. The span at 258–267 shows a compositional bias: basic and acidic residues; sequence DLSDVGKKSS. A compositionally biased stretch (acidic residues) spans 305-314; it reads SESEDEITVS.

The protein belongs to the H2.0 homeobox family.

The protein resides in the nucleus. This chain is Homeobox protein DBX1-A (dbx1a), found in Danio rerio (Zebrafish).